The following is a 137-amino-acid chain: Large ribosomal subunit protein uL16 (137 aa).

This sequence belongs to the universal ribosomal protein uL16 family. Part of the 50S ribosomal subunit.

Functionally, binds 23S rRNA and is also seen to make contacts with the A and possibly P site tRNAs. The protein is Large ribosomal subunit protein uL16 of Maricaulis maris (strain MCS10) (Caulobacter maris).